Consider the following 259-residue polypeptide: MTTPFTVIIPARYASHRFPGKPLASLLGWPMIHHVCRRAEESGAARILVATDHREIAHACREEGREVVMTRHDHPSGTDRLAEVAERLGLDDDQIVVNLQGDEPLMPGRLVRQVALDLAAHRDAGIATLATLCHSLDEVRSPHAVKVVRDRQGYALYFSRAPIPWDRDGFSGAAGAARSPGQWLRHLGLYAYRVGFLRRYPALEAAPPEGLEALEQLRALWHGVRIHVGLAHQVPGPGVDTPQDLAQVERLLAEQGPPA.

The protein belongs to the KdsB family.

It is found in the cytoplasm. The catalysed reaction is 3-deoxy-alpha-D-manno-oct-2-ulosonate + CTP = CMP-3-deoxy-beta-D-manno-octulosonate + diphosphate. Its pathway is nucleotide-sugar biosynthesis; CMP-3-deoxy-D-manno-octulosonate biosynthesis; CMP-3-deoxy-D-manno-octulosonate from 3-deoxy-D-manno-octulosonate and CTP: step 1/1. It functions in the pathway bacterial outer membrane biogenesis; lipopolysaccharide biosynthesis. In terms of biological role, activates KDO (a required 8-carbon sugar) for incorporation into bacterial lipopolysaccharide in Gram-negative bacteria. This chain is 3-deoxy-manno-octulosonate cytidylyltransferase, found in Alkalilimnicola ehrlichii (strain ATCC BAA-1101 / DSM 17681 / MLHE-1).